We begin with the raw amino-acid sequence, 5112 residues long: Malformin synthetase mlfA (5112 aa).

The tract at residues 225–616 (ERHAANRPHS…CGRADTQVKL (392 aa)) is adenylation 1. Positions 757-830 (SRLEQEIQLA…EAASLAEVQE (74 aa)) constitute a Carrier 1 domain. Ser791 carries the O-(pantetheine 4'-phosphoryl)serine modification. A condensation 1 region spans residues 868 to 1299 (EDVFPCTTMQ…ALDSLTLLQA (432 aa)). An adenylation 2 region spans residues 1327-1716 (DRRVTRQPDT…GRKDTQVKLR (390 aa)). One can recognise a Carrier 2 domain in the interval 1854-1931 (TAASELERTL…QLAAELGESP (78 aa)). O-(pantetheine 4'-phosphoryl)serine is present on Ser1891. Disordered stretches follow at residues 1926-1961 (ELGE…DGVD) and 1994-2034 (GGSS…VPEP). 2 stretches are compositionally biased toward low complexity: residues 1930-1941 (SPRSSTSSASSS) and 1994-2012 (GGSS…SSSS). A condensation 2 region spans residues 2064-2479 (EDIYPATALQ…AVSYSDKQTL (416 aa)). An adenylation 3 region spans residues 2502 to 2894 (IRTPHAPAVC…IGRRDGQVKL (393 aa)). Residues 3030–3106 (RPTTAKECEM…QLLFHLRNAK (77 aa)) form the Carrier 3 domain. Ser3067 is subject to O-(pantetheine 4'-phosphoryl)serine. 2 condensation regions span residues 3122–3586 (WVDL…TYEQ) and 3607–4044 (NIYP…EQLV). Positions 4069 to 4459 (HSSRQAVCAW…VGRKDNQIKF (391 aa)) are adenylation 4. Positions 4593–4669 (MPSTEAECIM…DLARHNSLVQ (77 aa)) constitute a Carrier 4 domain. Ser4630 carries the post-translational modification O-(pantetheine 4'-phosphoryl)serine. The interval 4724–5106 (IVVDIPGRIS…VEKVVALLRD (383 aa)) is condensation 5.

Belongs to the NRP synthetase family.

Its pathway is secondary metabolite biosynthesis. Nonribosomal peptide synthetase; part of the gene cluster that mediates the biosynthesis of malformins, cyclic pentapeptides with a disulfide bond between 2 consecutive cysteins, that show potential anti-tumor as well as antimalarial and antitrypanosomal properties. The nonribosomal peptide synthetase mlfA is responsible of the formation of the cyclic pentapeptide. MlfA probably acts iteratively on one amino acid and possesses multiple amino acid specificities since it is involved in the biosynthesis of multiple malformins, including malformin C and malformin A2. Malformin C corresponds to a cyclo[D-Cys-D-Cys-Val-D-Leu-Val] pentapeptide whereas malformin A2 corresponds to a cyclo[D-Cys-D-Cys-Val-D-Leu-Ile] pentapeptide. The malformin biosynthesis clusters in malformin-producing fungi also contain enzymes involved in the formation of the disulfide bond between the two consecutive cysteins within malformins, in addition to additional tailoring enzymes such as methyltransferases or oxidoreductases. They are also composed of up to 4 major facilitator superfamily transporters, and transcription factors probably involved in the regulation of the expression of those clusters. This chain is Malformin synthetase mlfA, found in Aspergillus brasiliensis (strain CBS 101740 / IMI 381727 / IBT 21946).